The following is a 573-amino-acid chain: 2-succinyl-5-enolpyruvyl-6-hydroxy-3-cyclohexene-1-carboxylate synthase (573 aa).

The protein belongs to the TPP enzyme family. MenD subfamily. In terms of assembly, homodimer. Mg(2+) is required as a cofactor. The cofactor is Mn(2+). Thiamine diphosphate serves as cofactor.

The enzyme catalyses isochorismate + 2-oxoglutarate + H(+) = 5-enolpyruvoyl-6-hydroxy-2-succinyl-cyclohex-3-ene-1-carboxylate + CO2. It functions in the pathway quinol/quinone metabolism; 1,4-dihydroxy-2-naphthoate biosynthesis; 1,4-dihydroxy-2-naphthoate from chorismate: step 2/7. The protein operates within quinol/quinone metabolism; menaquinone biosynthesis. Its function is as follows. Catalyzes the thiamine diphosphate-dependent decarboxylation of 2-oxoglutarate and the subsequent addition of the resulting succinic semialdehyde-thiamine pyrophosphate anion to isochorismate to yield 2-succinyl-5-enolpyruvyl-6-hydroxy-3-cyclohexene-1-carboxylate (SEPHCHC). This is 2-succinyl-5-enolpyruvyl-6-hydroxy-3-cyclohexene-1-carboxylate synthase from Shewanella sp. (strain MR-4).